The following is a 305-amino-acid chain: MSKKLTFQEIILTLQQFWNDQGCMLMQAYDNEKGAGTMSPYTFLRAIGPEPWNAAYVEPSRRPADGRYGENPNRLYQHHQFQVVMKPSPSNIQELYLQSLELLGINPLEHDIRFVEDNWENPSTGSAGLGWEVWLDGMEITQFTYFQQVGGLPTQPVTAEVTYGLERLASYIQEVDSVYDIEWADGVKYGEIFTHPEYEHSKYSFEVSDQDLLLGNFERFEAEAKRCLDEHLVHPAYDYVLKCSHTFNLLDARGAVSVTERAGYIARIRNLARVVAKTFVAERKRLGYPLLDAETREKLLAEEGE.

Belongs to the class-II aminoacyl-tRNA synthetase family. As to quaternary structure, tetramer of two alpha and two beta subunits.

Its subcellular location is the cytoplasm. The catalysed reaction is tRNA(Gly) + glycine + ATP = glycyl-tRNA(Gly) + AMP + diphosphate. The sequence is that of Glycine--tRNA ligase alpha subunit from Streptococcus gordonii (strain Challis / ATCC 35105 / BCRC 15272 / CH1 / DL1 / V288).